The sequence spans 133 residues: UPF0102 protein Anae109_1947 (133 aa).

Belongs to the UPF0102 family.

This is UPF0102 protein Anae109_1947 from Anaeromyxobacter sp. (strain Fw109-5).